Consider the following 488-residue polypeptide: MSFNNQSIDQLHDFLVKKEISATELTKATLEDIHAREQAVGSFITISDEMAIAQAKEIDDKGIDADNVMSGIPLAVKDNISTKGILTTAASKMLYNYEPIFDATAVEKLYAKDMIVIGKANMDEFAMGGSTETSYFKKTNNAWDHSKVPGGSSGGSAAAVASGQVRLSLGSDTGGSIRQPASFNGIVGMKPTYGRVSRFGLFAFGSSLDQIGPMSQTVKENAQLLTVISGHDVRDSTSSERTVGDFTAKIGQDIQGMKIALPKEYLGEGIAQGVKETIIKAAKHLEKLGAVIEEVSLPHSKYGVAVYYIVASSEASSNLQRFDGIRYGYRTENYKNLDDIYVNTRSEGFGDEVKRRIMLGTFSLSSGYYDAYYKKAGQVRSLIIQDFEKVFADYDLILGPTAPTTAFDLDSLNHDPVAMYLADILTIPVNLAGLPGISIPAGFDQGLPVGMQLIGPKFSEETIYQVAAAFEATTDYHKQQPKIFGGEN.

Active-site charge relay system residues include Lys-77 and Ser-152. Ser-176 acts as the Acyl-ester intermediate in catalysis.

The protein belongs to the amidase family. GatA subfamily. Heterotrimer of A, B and C subunits.

It catalyses the reaction L-glutamyl-tRNA(Gln) + L-glutamine + ATP + H2O = L-glutaminyl-tRNA(Gln) + L-glutamate + ADP + phosphate + H(+). In terms of biological role, allows the formation of correctly charged Gln-tRNA(Gln) through the transamidation of misacylated Glu-tRNA(Gln) in organisms which lack glutaminyl-tRNA synthetase. The reaction takes place in the presence of glutamine and ATP through an activated gamma-phospho-Glu-tRNA(Gln). The chain is Glutamyl-tRNA(Gln) amidotransferase subunit A from Streptococcus agalactiae serotype Ia (strain ATCC 27591 / A909 / CDC SS700).